The chain runs to 104 residues: L-rhamnose mutarotase (104 aa).

Tyrosine 18 is a substrate binding site. Residue histidine 22 is the Proton donor of the active site. Substrate is bound by residues tyrosine 41 and tryptophan 76–tryptophan 77.

The protein belongs to the rhamnose mutarotase family. In terms of assembly, homodimer.

The protein localises to the cytoplasm. The catalysed reaction is alpha-L-rhamnose = beta-L-rhamnose. It functions in the pathway carbohydrate metabolism; L-rhamnose metabolism. Its function is as follows. Involved in the anomeric conversion of L-rhamnose. The sequence is that of L-rhamnose mutarotase from Bacteroides thetaiotaomicron (strain ATCC 29148 / DSM 2079 / JCM 5827 / CCUG 10774 / NCTC 10582 / VPI-5482 / E50).